The primary structure comprises 186 residues: Threonylcarbamoyl-AMP synthase (186 aa).

In terms of domain architecture, YrdC-like spans 3-186 (ELTLDSAVAT…DALSGNVLRS (184 aa)).

Belongs to the SUA5 family. TsaC subfamily.

It localises to the cytoplasm. The catalysed reaction is L-threonine + hydrogencarbonate + ATP = L-threonylcarbamoyladenylate + diphosphate + H2O. In terms of biological role, required for the formation of a threonylcarbamoyl group on adenosine at position 37 (t(6)A37) in tRNAs that read codons beginning with adenine. Catalyzes the conversion of L-threonine, HCO(3)(-)/CO(2) and ATP to give threonylcarbamoyl-AMP (TC-AMP) as the acyladenylate intermediate, with the release of diphosphate. In Stenotrophomonas maltophilia (strain K279a), this protein is Threonylcarbamoyl-AMP synthase.